Here is a 457-residue protein sequence, read N- to C-terminus: tRNA modification GTPase MnmE (457 aa).

Positions 25, 87, and 126 each coordinate (6S)-5-formyl-5,6,7,8-tetrahydrofolate. The 155-residue stretch at 223-377 (GISTAIIGRP…IEERINNLFF (155 aa)) folds into the TrmE-type G domain. A K(+)-binding site is contributed by N233. GTP contacts are provided by residues 233 to 238 (NVGKSS), 252 to 258 (TDIAGTT), and 277 to 280 (DTAG). S237 is a binding site for Mg(2+). Positions 252, 254, and 257 each coordinate K(+). T258 is a binding site for Mg(2+). K457 lines the (6S)-5-formyl-5,6,7,8-tetrahydrofolate pocket.

Belongs to the TRAFAC class TrmE-Era-EngA-EngB-Septin-like GTPase superfamily. TrmE GTPase family. Homodimer. Heterotetramer of two MnmE and two MnmG subunits. The cofactor is K(+).

The protein localises to the cytoplasm. In terms of biological role, exhibits a very high intrinsic GTPase hydrolysis rate. Involved in the addition of a carboxymethylaminomethyl (cmnm) group at the wobble position (U34) of certain tRNAs, forming tRNA-cmnm(5)s(2)U34. This chain is tRNA modification GTPase MnmE, found in Streptococcus pneumoniae (strain Hungary19A-6).